A 34-amino-acid chain; its full sequence is Photosystem II reaction center protein M (34 aa).

A helical transmembrane segment spans residues 5–25; sequence ILAFIATVLFILVPTAFLLII.

The protein belongs to the PsbM family. PSII is composed of 1 copy each of membrane proteins PsbA, PsbB, PsbC, PsbD, PsbE, PsbF, PsbH, PsbI, PsbJ, PsbK, PsbL, PsbM, PsbT, PsbX, PsbY, PsbZ, Psb30/Ycf12, at least 3 peripheral proteins of the oxygen-evolving complex and a large number of cofactors. It forms dimeric complexes.

It localises to the plastid. Its subcellular location is the chloroplast thylakoid membrane. Its function is as follows. One of the components of the core complex of photosystem II (PSII). PSII is a light-driven water:plastoquinone oxidoreductase that uses light energy to abstract electrons from H(2)O, generating O(2) and a proton gradient subsequently used for ATP formation. It consists of a core antenna complex that captures photons, and an electron transfer chain that converts photonic excitation into a charge separation. This subunit is found at the monomer-monomer interface. The chain is Photosystem II reaction center protein M from Piper cenocladum (Ant piper).